Consider the following 792-residue polypeptide: uncharacterized protein (792 aa).

25 tandem repeats follow at residues 91 to 102 (NSSTNATTTASI), 103 to 114 (NVRTSATTTASI), 115 to 126 (NVRTSATTTEST), 127 to 138 (NSNTNATTTEST), 139 to 150 (NSSTNATTTASI), 151 to 162 (NVRTSATTTEST), 163 to 174 (NSSTNATTTASI), 175 to 186 (NVRTSATTTEST), 187 to 198 (NSSTNATTTASI), 199 to 210 (NVRTSATTTEST), 211 to 222 (NSNTNASTNATT), 223 to 234 (NSSTNATTTAST), 235 to 246 (NVRTSATTNATT), 247 to 258 (NSSTNATTTAST), 259 to 270 (NVRTSATTTAST), 271 to 282 (NVRTSATTTASI), 283 to 294 (NVRTSATTTESI), 295 to 306 (NSSTNATTTEST), 307 to 318 (NSNTSATTTEST), 319 to 330 (DSNTNATTTASI), 331 to 342 (NVRTSATTTEST), 343 to 354 (NSNTSATTTEST), 355 to 366 (DSNTSATTTAST), 367 to 378 (NSSTNATTTAST), and 379 to 390 (NSSTNATTTEST). Positions 91–390 (NSSTNATTTA…STNATTTEST (300 aa)) are 25 X 12 AA tandem repeat of N-[SV]-[RS]-T-[NS]-A-T-T-T-[AE]-[ST]-[IT]. The segment at 113 to 417 (SINVRTSATT…RFHPVTDINK (305 aa)) is disordered. The segment covering 118-393 (TSATTTESTN…ATTTESTNAS (276 aa)) has biased composition (low complexity). The span at 394-417 (AKEDANKDGNAEDNRFHPVTDINK) shows a compositional bias: basic and acidic residues.

This is an uncharacterized protein from Saccharomyces cerevisiae (strain ATCC 204508 / S288c) (Baker's yeast).